Reading from the N-terminus, the 460-residue chain is Squalene synthase (460 aa).

Residues 425–445 (ISILFVFFIILVCLAVIFYVF) form a helical membrane-spanning segment.

Belongs to the phytoene/squalene synthase family. Interacts with pof14. Mg(2+) serves as cofactor.

The protein localises to the endoplasmic reticulum membrane. The enzyme catalyses 2 (2E,6E)-farnesyl diphosphate + NADPH + H(+) = squalene + 2 diphosphate + NADP(+). It catalyses the reaction 2 (2E,6E)-farnesyl diphosphate + NADH + H(+) = squalene + 2 diphosphate + NAD(+). Its pathway is terpene metabolism; lanosterol biosynthesis; lanosterol from farnesyl diphosphate: step 1/3. The protein operates within steroid metabolism; ergosterol biosynthesis. Squalene synthase; part of the third module of ergosterol biosynthesis pathway that includes by the late steps of the pathway. Erg9 produces squalene from 2 farnesyl pyrophosphate moieties. The third module or late pathway involves the ergosterol synthesis itself through consecutive reactions that mainly occur in the endoplasmic reticulum (ER) membrane. Firstly, the squalene synthase erg9 catalyzes the condensation of 2 farnesyl pyrophosphate moieties to form squalene, which is the precursor of all steroids. Secondly, squalene is converted into lanosterol by the consecutive action of the squalene epoxidase erg1 and the lanosterol synthase erg7. The lanosterol 14-alpha-demethylase erg11/cyp1 catalyzes C14-demethylation of lanosterol to produce 4,4'-dimethyl cholesta-8,14,24-triene-3-beta-ol. In the next steps, a complex process involving various demethylation, reduction and desaturation reactions catalyzed by the C-14 reductase erg24 and the C-4 demethylation complex erg25-erg26-erg27 leads to the production of zymosterol. Erg28 likely functions in the C-4 demethylation complex reaction by tethering erg26 and Erg27 to the endoplasmic reticulum or to facilitate interaction between these proteins. Then, the sterol 24-C-methyltransferase erg6 catalyzes the methyl transfer from S-adenosyl-methionine to the C-24 of zymosterol to form fecosterol. The C-8 sterol isomerase erg2 catalyzes the reaction which results in unsaturation at C-7 in the B ring of sterols and thus converts fecosterol to episterol. The sterol-C5-desaturases erg31 and erg32 then catalyze the introduction of a C-5 double bond in the B ring to produce 5-dehydroepisterol. The C-22 sterol desaturase erg5 further converts 5-dehydroepisterol into ergosta-5,7,22,24(28)-tetraen-3beta-ol by forming the C-22(23) double bond in the sterol side chain. Finally, ergosta-5,7,22,24(28)-tetraen-3beta-ol is substrate of the C-24(28) sterol reductase erg4 to produce ergosterol. In the genus Schizosaccharomyces, a second route exists between lanosterol and fecosterol, via the methylation of lanosterol to eburicol by erg6, followed by C14-demethylation by erg11/cyp1 and C4-demethylation by the demethylation complex erg25-erg26-erg27. This chain is Squalene synthase, found in Schizosaccharomyces pombe (strain 972 / ATCC 24843) (Fission yeast).